Reading from the N-terminus, the 252-residue chain is Membrane protein insertase YidC (252 aa).

Residues 1-20 (MRKKFGIIVALIALTTLLSG) form the signal peptide. The N-palmitoyl cysteine moiety is linked to residue C21. C21 carries S-diacylglycerol cysteine lipidation. Helical transmembrane passes span 59 to 79 (YGLA…PLNV), 129 to 149 (LAGC…YHAI), 160 to 180 (FLWF…GLFT), 206 to 226 (IMLY…PAAL), and 228 to 248 (LYWV…NKPM).

It belongs to the OXA1/ALB3/YidC family. Type 2 subfamily.

Its subcellular location is the cell membrane. Its function is as follows. Required for the insertion and/or proper folding and/or complex formation of integral membrane proteins into the membrane. Involved in integration of membrane proteins that insert both dependently and independently of the Sec translocase complex, as well as at least some lipoproteins. In Oceanobacillus iheyensis (strain DSM 14371 / CIP 107618 / JCM 11309 / KCTC 3954 / HTE831), this protein is Membrane protein insertase YidC.